The primary structure comprises 99 residues: Aspartyl/glutamyl-tRNA(Asn/Gln) amidotransferase subunit C (99 aa).

It belongs to the GatC family. As to quaternary structure, heterotrimer of A, B and C subunits.

It carries out the reaction L-glutamyl-tRNA(Gln) + L-glutamine + ATP + H2O = L-glutaminyl-tRNA(Gln) + L-glutamate + ADP + phosphate + H(+). The enzyme catalyses L-aspartyl-tRNA(Asn) + L-glutamine + ATP + H2O = L-asparaginyl-tRNA(Asn) + L-glutamate + ADP + phosphate + 2 H(+). Allows the formation of correctly charged Asn-tRNA(Asn) or Gln-tRNA(Gln) through the transamidation of misacylated Asp-tRNA(Asn) or Glu-tRNA(Gln) in organisms which lack either or both of asparaginyl-tRNA or glutaminyl-tRNA synthetases. The reaction takes place in the presence of glutamine and ATP through an activated phospho-Asp-tRNA(Asn) or phospho-Glu-tRNA(Gln). The sequence is that of Aspartyl/glutamyl-tRNA(Asn/Gln) amidotransferase subunit C from Burkholderia thailandensis (strain ATCC 700388 / DSM 13276 / CCUG 48851 / CIP 106301 / E264).